Consider the following 153-residue polypeptide: Transthyretin (153 aa).

Residues 1–24 (MAYYNTLALLTIFIFSGAFHRAQG) form the signal peptide. Residue cysteine 33 is modified to Sulfocysteine. L-thyroxine-binding residues include lysine 38, glutamate 77, and serine 140.

It belongs to the transthyretin family. Homotetramer. Dimer of dimers. In the homotetramer, subunits assemble around a central channel that can accommodate two ligand molecules. Interacts with RBP4. Sulfonation of the reactive cysteine Cys-33 enhances the stability of the native conformation of TTR, avoiding misassembly of the protein leading to amyloid formation. Detected in plasma (at protein level). Expressed during metamorphosis in tadpole liver but not in tadpole brain, nor adult liver.

The protein resides in the secreted. In terms of biological role, thyroid hormone-binding protein, with a much higher binding affinity for triiodothyronine (T3) than for thyroxine (T4). Probably transports triiodothyronine from the bloodstream to the brain. In Aquarana catesbeiana (American bullfrog), this protein is Transthyretin.